Reading from the N-terminus, the 320-residue chain is Reticulocalbin-2 (320 aa).

The first 25 residues, 1-25 (MRLGPRPAALGLLLPLLLYAAVAGA), serve as a signal peptide directing secretion. 2 EF-hand domains span residues 64-99 (EQQR…SFKH) and 100-135 (YAMQ…RVID). Asp77, Asp79, Asp81, Glu88, Asp113, Asn115, Asp117, and Glu124 together coordinate Ca(2+). A Phosphothreonine modification is found at Thr140. 4 EF-hand domains span residues 150-185 (FRQL…HPEE), 189-224 (MTEF…DPTA), 230-265 (WILV…NNQG), and 266-301 (IAQE…FLTS). Asp167, Glu176, Asp202, Asn204, Asp206, Glu213, Asp243, Asp245, Asp247, Arg249, Glu254, Asp279, Asn281, Asp283, Lys285, and Glu290 together coordinate Ca(2+). The Prevents secretion from ER motif lies at 317-320 (HDEL).

This sequence belongs to the CREC family.

It is found in the endoplasmic reticulum lumen. Its function is as follows. Not known. Binds calcium. The sequence is that of Reticulocalbin-2 (Rcn2) from Mus musculus (Mouse).